We begin with the raw amino-acid sequence, 84 residues long: Beta-cardiotoxin CTX27 (84 aa).

Positions Met-1 to Thr-21 are cleaved as a signal peptide. Disulfide bonds link Cys-24–Cys-43, Cys-36–Cys-61, Cys-65–Cys-76, and Cys-77–Cys-82.

Belongs to the three-finger toxin family. Short-chain subfamily. Aminergic toxin sub-subfamily. As to expression, expressed by the venom gland.

The protein localises to the secreted. Acts as a beta-blocker by binding to beta-1 and beta-2 adrenergic receptors (ADRB1 and ADRB2). It dose-dependently decreases the heart rate (bradycardia), whereas conventional cardiotoxins increases it. At 100 mg/kg, intraperitoneal injection into mice provokes labored breathing, impaired locomotion, lack of response to external stimuli, and death (after 30 minutes). The chain is Beta-cardiotoxin CTX27 from Ophiophagus hannah (King cobra).